Consider the following 362-residue polypeptide: GTPase Obg (362 aa).

The 159-residue stretch at 1–159 folds into the Obg domain; sequence MKFLDEAKVY…KTIWLRLKLI (159 aa). An OBG-type G domain is found at 160–327; it reads ADAGLVGLPN…VLRALRDVIV (168 aa). Residues 166–173, 191–195, 212–215, 279–282, and 308–310 each bind GTP; these read GLPNAGKS, FTTLH, DIPG, SQID, and SAV. Mg(2+) is bound by residues serine 173 and threonine 193. Residues 332–362 are disordered; that stretch reads EEKPAKVPKLRHRDMIVSDEGEGEDGADDQP. The segment covering 348–362 has biased composition (acidic residues); that stretch reads VSDEGEGEDGADDQP.

The protein belongs to the TRAFAC class OBG-HflX-like GTPase superfamily. OBG GTPase family. In terms of assembly, monomer. Requires Mg(2+) as cofactor.

The protein resides in the cytoplasm. Its function is as follows. An essential GTPase which binds GTP, GDP and possibly (p)ppGpp with moderate affinity, with high nucleotide exchange rates and a fairly low GTP hydrolysis rate. Plays a role in control of the cell cycle, stress response, ribosome biogenesis and in those bacteria that undergo differentiation, in morphogenesis control. This Rhizobium etli (strain CIAT 652) protein is GTPase Obg.